Consider the following 143-residue polypeptide: Large ribosomal subunit protein uL13 (143 aa).

The protein belongs to the universal ribosomal protein uL13 family. As to quaternary structure, part of the 50S ribosomal subunit.

Its function is as follows. This protein is one of the early assembly proteins of the 50S ribosomal subunit, although it is not seen to bind rRNA by itself. It is important during the early stages of 50S assembly. In Methanosarcina acetivorans (strain ATCC 35395 / DSM 2834 / JCM 12185 / C2A), this protein is Large ribosomal subunit protein uL13.